A 384-amino-acid polypeptide reads, in one-letter code: Inactive lipoate--protein ligase 2 (384 aa).

The BPL/LPL catalytic domain maps to 79-303 (NESKGNECIF…HIKHIINYKN (225 aa)).

Its subcellular location is the mitochondrion. It is found in the plastid. The protein resides in the apicoplast. In terms of biological role, in the mitochondrion and together with LipL1, involved in the lipoylation of the E2 component of the branched chain alpha-ketoacid dehydrogenase complex BCKDH-E2/BCDH and the E2 component of the alpha -ketoglutarate dehydrogenase complex KDH. LipL1 is responsible for catalysing the activation of lipoate, forming lipoyl-AMP while LipL2 is required but is not capable of catalyzing this reaction. Although its role is unclear, it may catalyze the transfer of lipoyl groups from lipoyl-AMP to BCDH and KDH or act as an effector protein. The chain is Inactive lipoate--protein ligase 2 from Plasmodium falciparum (isolate 3D7).